Reading from the N-terminus, the 426-residue chain is L-cysteine:1D-myo-inositol 2-amino-2-deoxy-alpha-D-glucopyranoside ligase (426 aa).

Cys45 provides a ligand contact to Zn(2+). Residues Cys45 to Thr48, Thr60, and Asn83 to Thr85 contribute to the L-cysteinyl-5'-AMP site. A 'HIGH' region motif is present at residues Ile47 to His57. The 'ERGGDP' region motif lies at Glu199–Pro204. Residue Trp239 coordinates L-cysteinyl-5'-AMP. Cys243 provides a ligand contact to Zn(2+). Gly261–Asp263 contributes to the L-cysteinyl-5'-AMP binding site. His268 is a Zn(2+) binding site. Val294 is a binding site for L-cysteinyl-5'-AMP. The 'KMSKS' region signature appears at Lys300 to Ser304.

Belongs to the class-I aminoacyl-tRNA synthetase family. MshC subfamily. As to quaternary structure, monomer. The cofactor is Zn(2+).

It carries out the reaction 1D-myo-inositol 2-amino-2-deoxy-alpha-D-glucopyranoside + L-cysteine + ATP = 1D-myo-inositol 2-(L-cysteinylamino)-2-deoxy-alpha-D-glucopyranoside + AMP + diphosphate + H(+). In terms of biological role, catalyzes the ATP-dependent condensation of GlcN-Ins and L-cysteine to form L-Cys-GlcN-Ins. The polypeptide is L-cysteine:1D-myo-inositol 2-amino-2-deoxy-alpha-D-glucopyranoside ligase (Clavibacter michiganensis subsp. michiganensis (strain NCPPB 382)).